Consider the following 79-residue polypeptide: Protein RALF-like 15 (79 aa).

The N-terminal stretch at 1–28 (MGMSKSIKVIVSLALILFLALAATKVEA) is a signal peptide. Disulfide bonds link Cys-46-Cys-54 and Cys-66-Cys-72.

Belongs to the plant rapid alkalinization factor (RALF) family.

The protein resides in the secreted. Functionally, cell signaling peptide that may regulate plant stress, growth, and development. Mediates a rapid alkalinization of extracellular space by mediating a transient increase in the cytoplasmic Ca(2+) concentration leading to a calcium-dependent signaling events through a cell surface receptor and a concomitant activation of some intracellular mitogen-activated protein kinases. This chain is Protein RALF-like 15 (RALFL15), found in Arabidopsis thaliana (Mouse-ear cress).